The chain runs to 220 residues: Guanylate kinase (220 aa).

Positions 11 to 190 (GVLFVLSSPS…CYGEVMAILR (180 aa)) constitute a Guanylate kinase-like domain. 18-25 (SPSGAGKT) is an ATP binding site.

Belongs to the guanylate kinase family.

The protein resides in the cytoplasm. It catalyses the reaction GMP + ATP = GDP + ADP. In terms of biological role, essential for recycling GMP and indirectly, cGMP. In Sphingopyxis alaskensis (strain DSM 13593 / LMG 18877 / RB2256) (Sphingomonas alaskensis), this protein is Guanylate kinase.